The primary structure comprises 500 residues: C6 finger domain transcription factor sirZ (500 aa).

The zn(2)-C6 fungal-type DNA-binding region spans Cys28–Cys54. The span at Gln79–Glu88 shows a compositional bias: basic and acidic residues. Disordered regions lie at residues Gln79–Ser168 and Ala302–Gln332. Acidic residues predominate over residues Gly135–Asp147. Low complexity predominate over residues Leu154–Glu165. Residues Ser304–Gly316 show a composition bias toward polar residues. A compositionally biased stretch (low complexity) spans Ser317–Ser328.

The protein localises to the nucleus. Its function is as follows. Transcription factor that regulates sirodesmin production and contributes to virulence. Probably binds to the consensus motif TCGGN(3)CCGA found in the promoters of sirT, sirP, sirO, sirN, sirP, sirB, sirR, sirJ and sirQ. The sequence is that of C6 finger domain transcription factor sirZ from Leptosphaeria maculans (Blackleg fungus).